Consider the following 364-residue polypeptide: Paraneoplastic antigen Ma2 homolog (364 aa).

Position 2 is an N-acetylalanine (alanine 2). Acidic residues predominate over residues 335–353 (EEEEASFENESIEEPEEGD). A disordered region spans residues 335 to 364 (EEEEASFENESIEEPEEGDGYGGWNHEGDD). Residues 354–364 (GYGGWNHEGDD) are compositionally biased toward gly residues.

The protein belongs to the PNMA family.

It is found in the nucleus. The protein localises to the nucleolus. The sequence is that of Paraneoplastic antigen Ma2 homolog (PNMA2) from Macaca fascicularis (Crab-eating macaque).